We begin with the raw amino-acid sequence, 274 residues long: Pyrogallol hydroxytransferase small subunit (274 aa).

The [4Fe-4S] cluster site is built by C13, C16, C19, C23, C68, C71, C76, C109, C126, C129, C145, and C149.

As to quaternary structure, heterodimer of a large and a small subunit. It depends on [4Fe-4S] cluster as a cofactor.

The catalysed reaction is 1,2,3,5-tetrahydroxybenzene + 1,2,3-trihydroxybenzene = 1,2,3,5-tetrahydroxybenzene + 1,3,5-trihydroxybenzene. Functionally, isomerization of pyrogallol to phloroglucin. The protein is Pyrogallol hydroxytransferase small subunit (bthL) of Pelobacter acidigallici.